The primary structure comprises 315 residues: Methionyl-tRNA formyltransferase (315 aa).

Position 113–116 (113–116 (SLLP)) interacts with (6S)-5,6,7,8-tetrahydrofolate.

The protein belongs to the Fmt family.

It carries out the reaction L-methionyl-tRNA(fMet) + (6R)-10-formyltetrahydrofolate = N-formyl-L-methionyl-tRNA(fMet) + (6S)-5,6,7,8-tetrahydrofolate + H(+). Functionally, attaches a formyl group to the free amino group of methionyl-tRNA(fMet). The formyl group appears to play a dual role in the initiator identity of N-formylmethionyl-tRNA by promoting its recognition by IF2 and preventing the misappropriation of this tRNA by the elongation apparatus. This chain is Methionyl-tRNA formyltransferase, found in Cronobacter sakazakii (strain ATCC BAA-894) (Enterobacter sakazakii).